The chain runs to 614 residues: Zinc finger protein ztf-7 (614 aa).

Gly residues predominate over residues 1-10; sequence MSTSGSGGGN. Positions 1 to 160 are disordered; the sequence is MSTSGSGGGN…SRPKKPEKMS (160 aa). Residues 18–41 show a composition bias toward polar residues; that stretch reads NVASSPNANPKKNADTESSGGSKN. A compositionally biased stretch (low complexity) spans 54-69; it reads GSNSRNGSRTNSVSNS. The segment covering 74–83 has biased composition (basic and acidic residues); it reads NRKDWTDRKS. Residues 132–150 show a composition bias toward acidic residues; the sequence is DYSDEYELDEPFSDSDDED. 2 consecutive C2H2-type zinc fingers follow at residues 356-380 and 447-470; these read NECIYCEKIFPDRNTLMDHMRKRNH and VVCLLCDASEDNAQSLLEHMKTTH.

Belongs to the ZNF277 family. As to quaternary structure, interacts with rps-2.

It is found in the cytoplasm. Probable transcription factor. Limits the ability to tolerate cold environment or cold-warm stress. In complex with rps-2, mediates the cold-warm shock response by promoting translocation of components of the RNA exosome from the nucleolus to nucleoplasm. The chain is Zinc finger protein ztf-7 from Caenorhabditis elegans.